Consider the following 920-residue polypeptide: Isoleucine--tRNA ligase (920 aa).

A 'HIGH' region motif is present at residues 58–68 (PYANGHLHLGH). E569 lines the L-isoleucyl-5'-AMP pocket. A 'KMSKS' region motif is present at residues 610-614 (KMSKS). K613 is a binding site for ATP. Positions 895, 898, 910, and 913 each coordinate Zn(2+).

The protein belongs to the class-I aminoacyl-tRNA synthetase family. IleS type 1 subfamily. As to quaternary structure, monomer. It depends on Zn(2+) as a cofactor.

It localises to the cytoplasm. The catalysed reaction is tRNA(Ile) + L-isoleucine + ATP = L-isoleucyl-tRNA(Ile) + AMP + diphosphate. Functionally, catalyzes the attachment of isoleucine to tRNA(Ile). As IleRS can inadvertently accommodate and process structurally similar amino acids such as valine, to avoid such errors it has two additional distinct tRNA(Ile)-dependent editing activities. One activity is designated as 'pretransfer' editing and involves the hydrolysis of activated Val-AMP. The other activity is designated 'posttransfer' editing and involves deacylation of mischarged Val-tRNA(Ile). The sequence is that of Isoleucine--tRNA ligase from Helicobacter pylori (strain HPAG1).